A 554-amino-acid chain; its full sequence is Phosphomethylpyrimidine synthase (554 aa).

Substrate contacts are provided by residues N188, M217, Y246, H282, 302–304 (SRG), 343–346 (DGLR), and E382. Zn(2+) is bound at residue H386. Substrate is bound at residue Y409. Zn(2+) is bound at residue H450. C530, C533, and C538 together coordinate [4Fe-4S] cluster.

This sequence belongs to the ThiC family. In terms of assembly, homodimer. [4Fe-4S] cluster is required as a cofactor.

The enzyme catalyses 5-amino-1-(5-phospho-beta-D-ribosyl)imidazole + S-adenosyl-L-methionine = 4-amino-2-methyl-5-(phosphooxymethyl)pyrimidine + CO + 5'-deoxyadenosine + formate + L-methionine + 3 H(+). Its pathway is cofactor biosynthesis; thiamine diphosphate biosynthesis. In terms of biological role, catalyzes the synthesis of the hydroxymethylpyrimidine phosphate (HMP-P) moiety of thiamine from aminoimidazole ribotide (AIR) in a radical S-adenosyl-L-methionine (SAM)-dependent reaction. This Coxiella burnetii (strain RSA 493 / Nine Mile phase I) protein is Phosphomethylpyrimidine synthase.